A 518-amino-acid polypeptide reads, in one-letter code: Nicotine N-demethylase CYP82E3 (518 aa).

Residues 2 to 22 traverse the membrane as a helical segment; that stretch reads VFPVEAIVGLVTFTFLFYFLW. Lys-254 is covalently cross-linked (Glycyl lysine isopeptide (Lys-Gly) (interchain with G-Cter in ubiquitin)). Residue Cys-458 participates in heme binding.

This sequence belongs to the cytochrome P450 family. CYP82E2 subfamily. Heme is required as a cofactor. Expressed in leaves.

The protein localises to the membrane. It catalyses the reaction (S)-nicotine + reduced [NADPH--hemoprotein reductase] + O2 = (S)-nornicotine + formaldehyde + oxidized [NADPH--hemoprotein reductase] + H2O + H(+). Its pathway is alkaloid biosynthesis; nicotine biosynthesis. Functionally, involved in the biosynthesis of pyridine alkaloid natural products, leading mainly to the production of anabasine, anatabine, nicotine and nornicotine, effective deterrents against herbivores with antiparasitic and pesticide properties (neurotoxins); nornicotine serves as the precursor in the synthesis of the carcinogen compound N'-nitrosonornicotine (NNN). Catalyzes the demethylation of nicotine to form nornicotine. The chain is Nicotine N-demethylase CYP82E3 from Nicotiana tomentosiformis (Tobacco).